Consider the following 807-residue polypeptide: Glycerol-3-phosphate acyltransferase (807 aa).

The HXXXXD motif signature appears at 308-313 (CHRSHM).

Belongs to the GPAT/DAPAT family.

It localises to the cell inner membrane. The enzyme catalyses sn-glycerol 3-phosphate + an acyl-CoA = a 1-acyl-sn-glycero-3-phosphate + CoA. The protein operates within phospholipid metabolism; CDP-diacylglycerol biosynthesis; CDP-diacylglycerol from sn-glycerol 3-phosphate: step 1/3. In Shewanella halifaxensis (strain HAW-EB4), this protein is Glycerol-3-phosphate acyltransferase.